A 321-amino-acid polypeptide reads, in one-letter code: F-box protein At4g35930 (321 aa).

The span at 1–13 shows a compositional bias: basic and acidic residues; it reads MGKVSPKDLDSKT. A disordered region spans residues 1-23; the sequence is MGKVSPKDLDSKTSVRKKKLKSS. The F-box domain maps to 159–207; the sequence is ESQLESLPMDLLVKIVCHLHHDQLKAVFHVSQRIRMATILARQYHFNYT. The segment at 228–258 is disordered; that stretch reads WPFRRGDGNPTMVSSPHTPKAPKHAPRPPSR.

The protein is F-box protein At4g35930 of Arabidopsis thaliana (Mouse-ear cress).